Reading from the N-terminus, the 86-residue chain is Cardiotoxin homolog TA-ctx-like (86 aa).

Positions 1 to 21 (MKTLLLTLVVLTIACLDLGYT) are cleaved as a signal peptide. Intrachain disulfides connect Cys-24-Cys-45, Cys-38-Cys-62, Cys-66-Cys-78, and Cys-79-Cys-84.

This sequence belongs to the three-finger toxin family. Short-chain subfamily. Orphan group IX sub-subfamily. As to expression, expressed by the venom gland.

It localises to the secreted. The sequence is that of Cardiotoxin homolog TA-ctx-like from Bungarus multicinctus (Many-banded krait).